The following is a 1077-amino-acid chain: ATP-dependent helicase HRQ1 (1077 aa).

The 185-residue stretch at 299 to 483 (INSLHQGENV…DMFGINEVTL (185 aa)) folds into the Helicase ATP-binding domain. 312–319 (TSTSSGKS) serves as a coordination point for ATP. The DEAH box signature appears at 423-426 (DELH). The region spanning 521 to 678 (ILVQLILNNV…DLVLDFNNIL (158 aa)) is the Helicase C-terminal domain.

Belongs to the helicase family. HRQ1 subfamily. In terms of assembly, forms heptamer rings. Interacts with RAD4. The cofactor is Mg(2+).

The protein localises to the nucleus. It carries out the reaction Couples ATP hydrolysis with the unwinding of duplex DNA by translocating in the 3'-5' direction.. It catalyses the reaction ATP + H2O = ADP + phosphate + H(+). In terms of biological role, helicase with 3'-5' helicase activity involved in genome stability. Functions in the RAD4-dependent nucleotide excision repair (NER) pathway and plays a critical role in DNA interstrand cross-link repair. Unwinds relatively long duplex DNA up to 120-bp and requires a long 3'-tail of at least 70 nucleotides for efficient unwinding of duplex DNA. Activity is significantly stimulated by a preexisting fork structure. Shows both processive helicase and DNA strand annealing activities. Affects telomere length by a non-catalytic mechanism, probably through inhibiting telomerase by competing with it for ssDNA binding. The protein is ATP-dependent helicase HRQ1 of Saccharomyces cerevisiae (strain ATCC 204508 / S288c) (Baker's yeast).